We begin with the raw amino-acid sequence, 289 residues long: Methionyl-tRNA formyltransferase (289 aa).

Residue 106-109 (SLLP) coordinates (6S)-5,6,7,8-tetrahydrofolate.

The protein belongs to the Fmt family.

It carries out the reaction L-methionyl-tRNA(fMet) + (6R)-10-formyltetrahydrofolate = N-formyl-L-methionyl-tRNA(fMet) + (6S)-5,6,7,8-tetrahydrofolate + H(+). Functionally, attaches a formyl group to the free amino group of methionyl-tRNA(fMet). The formyl group appears to play a dual role in the initiator identity of N-formylmethionyl-tRNA by promoting its recognition by IF2 and preventing the misappropriation of this tRNA by the elongation apparatus. The sequence is that of Methionyl-tRNA formyltransferase from Mycoplasmopsis pulmonis (strain UAB CTIP) (Mycoplasma pulmonis).